The chain runs to 216 residues: Transmembrane emp24 domain-containing protein eca (216 aa).

The first 20 residues, 1 to 20 (MRDQFISLALILCVLHSACG), serve as a signal peptide directing secretion. At 21–182 (LYFHISETER…FRHTSESTNS (162 aa)) the chain is on the lumenal side. Residues 30-126 (RKCFIEEVPD…QLRVHLDIQV (97 aa)) enclose the GOLD domain. Residues 134 to 164 (AHVAQKEKLTELQLRIRQLLDQVEQITKEQN) adopt a coiled-coil conformation. A helical transmembrane segment spans residues 183-203 (RVLWWSLAQTVVLVCMGFWQM). At 204 to 216 (RHLKSFFEAKKLV) the chain is on the cytoplasmic side. Residues 213–216 (KKLV) carry the Prevents secretion from ER motif.

It belongs to the EMP24/GP25L family.

It is found in the endoplasmic reticulum membrane. Eca and bai are essential, though not redundant, for dorsoventral patterning of the embryo. Specifically required during early embryogenesis for the activity of maternal tkv, while the zygotic tkv is not affected. Involved in Golgi organization. This Drosophila melanogaster (Fruit fly) protein is Transmembrane emp24 domain-containing protein eca.